A 529-amino-acid polypeptide reads, in one-letter code: PTS system alpha-glucoside-specific EIICB component (529 aa).

The PTS EIIC type-1 domain maps to 1-416 (MMKKVQRFGG…MDLKTPGRED (416 aa)). Helical transmembrane passes span 8–28 (FGGA…VVGL), 59–79 (GWTV…ISLA), 91–111 (FALY…FYGI), 130–150 (VPTL…VVYL), 170–190 (VFVY…TVLI), 198–218 (ISAL…IYTF), 222–242 (ILIP…GPAA), 272–292 (GGFA…ALAM), 304–324 (VAAL…TEPL), 328–348 (FLFI…TMAA), 352–372 (AFGV…LNWI), and 380–400 (GTVI…FVVF). One can recognise a PTS EIIB type-1 domain in the interval 450 to 529 (AQKGAIILEA…ERIEEMMKKG (80 aa)). Cys472 functions as the Phosphocysteine intermediate; for EIIB activity in the catalytic mechanism.

The protein localises to the cell membrane. The phosphoenolpyruvate-dependent sugar phosphotransferase system (sugar PTS), a major carbohydrate active -transport system, catalyzes the phosphorylation of incoming sugar substrates concomitantly with their translocation across the cell membrane. This system is probably involved in transport of the alpha-glucosides trehalulose, turanose, maltulose and palatinose. This is PTS system alpha-glucoside-specific EIICB component from Leptotrichia buccalis (strain ATCC 14201 / DSM 1135 / JCM 12969 / NCTC 10249 / C-1013-b).